The chain runs to 361 residues: Queuine tRNA-ribosyltransferase (361 aa).

The active-site Proton acceptor is Asp-92. Residues 92–96 (DSGGF), Asp-146, Gln-189, and Gly-216 each bind substrate. The segment at 247–253 (GVGKPAD) is RNA binding. The Nucleophile role is filled by Asp-266. The interval 271-275 (TRSGR) is RNA binding; important for wobble base 34 recognition. Zn(2+) contacts are provided by Cys-304, Cys-306, Cys-309, and His-335.

The protein belongs to the queuine tRNA-ribosyltransferase family. As to quaternary structure, homodimer. Within each dimer, one monomer is responsible for RNA recognition and catalysis, while the other monomer binds to the replacement base PreQ1. Requires Zn(2+) as cofactor.

It carries out the reaction 7-aminomethyl-7-carbaguanine + guanosine(34) in tRNA = 7-aminomethyl-7-carbaguanosine(34) in tRNA + guanine. It functions in the pathway tRNA modification; tRNA-queuosine biosynthesis. Catalyzes the base-exchange of a guanine (G) residue with the queuine precursor 7-aminomethyl-7-deazaguanine (PreQ1) at position 34 (anticodon wobble position) in tRNAs with GU(N) anticodons (tRNA-Asp, -Asn, -His and -Tyr). Catalysis occurs through a double-displacement mechanism. The nucleophile active site attacks the C1' of nucleotide 34 to detach the guanine base from the RNA, forming a covalent enzyme-RNA intermediate. The proton acceptor active site deprotonates the incoming PreQ1, allowing a nucleophilic attack on the C1' of the ribose to form the product. After dissociation, two additional enzymatic reactions on the tRNA convert PreQ1 to queuine (Q), resulting in the hypermodified nucleoside queuosine (7-(((4,5-cis-dihydroxy-2-cyclopenten-1-yl)amino)methyl)-7-deazaguanosine). The polypeptide is Queuine tRNA-ribosyltransferase (Rickettsia typhi (strain ATCC VR-144 / Wilmington)).